The sequence spans 498 residues: ATP synthase subunit beta, chloroplastic (498 aa).

Gly-172–Thr-179 serves as a coordination point for ATP.

This sequence belongs to the ATPase alpha/beta chains family. In terms of assembly, F-type ATPases have 2 components, CF(1) - the catalytic core - and CF(0) - the membrane proton channel. CF(1) has five subunits: alpha(3), beta(3), gamma(1), delta(1), epsilon(1). CF(0) has four main subunits: a(1), b(1), b'(1) and c(9-12).

The protein localises to the plastid. The protein resides in the chloroplast thylakoid membrane. The enzyme catalyses ATP + H2O + 4 H(+)(in) = ADP + phosphate + 5 H(+)(out). Its function is as follows. Produces ATP from ADP in the presence of a proton gradient across the membrane. The catalytic sites are hosted primarily by the beta subunits. In Castanea sativa (Sweet chestnut), this protein is ATP synthase subunit beta, chloroplastic.